We begin with the raw amino-acid sequence, 782 residues long: General transcription and DNA repair factor IIH helicase/translocase subunit XPB (782 aa).

Residues 1-11 show a composition bias toward basic and acidic residues; sequence MGKRDRADRDK. Disordered regions lie at residues 1–51 and 218–241; these read MGKR…ESGT and SAIS…PQGK. The Nuclear localization signal signature appears at 6–18; sequence RADRDKKKSRKRH. Positions 21–30 are enriched in acidic residues; sequence DEEDDEEDAP. Residues 218–236 show a composition bias toward polar residues; that stretch reads SAISKTAESSGGPSTSRVT. The Helicase ATP-binding domain occupies 327–488; sequence MFGNGRARSG…DLNFLIGPKL (162 aa). 340–347 provides a ligand contact to ATP; it reads LPCGAGKS. A DEVH box motif is present at residues 441–444; the sequence is DEVH. The region spanning 542-702 is the Helicase C-terminal domain; sequence RACQFLIKFH…LAGMEEEDLA (161 aa). At S686 the chain carries Phosphoserine. S751 carries the phosphoserine; by CK2 modification.

The protein belongs to the helicase family. RAD25/XPB subfamily. In terms of assembly, component of the 7-subunit TFIIH core complex composed of XPB/ERCC3, XPD/ERCC2, GTF2H1, GTF2H2, GTF2H3, GTF2H4 and GTF2H5, which is active in NER. The core complex associates with the 3-subunit CDK-activating kinase (CAK) module composed of CCNH/cyclin H, CDK7 and MNAT1 to form the 10-subunit holoenzyme (holo-TFIIH) active in transcription. Interacts with PUF60. Interacts with ATF7IP. Interacts with KAT2A; leading to KAT2A recruitment to promoters and acetylation of histones. Part of TBP-based Pol II pre-initiation complex (PIC), in which Pol II core assembles with general transcription factors and other specific initiation factors including GTF2E1, GTF2E2, GTF2F1, GTF2F2, TCEA1, ERCC2, ERCC3, GTF2H2, GTF2H3, GTF2H4, GTF2H5, GTF2A1, GTF2A2, GTF2B and TBP; this large multi-subunit PIC complex mediates DNA unwinding and targets Pol II core to the transcription start site where the first phosphodiester bond forms. In terms of processing, phosphorylation on Ser-751 by CK2 controls the 5'-excision activity of ERCC1-XPF endonuclease; phosphorylated protein inhibits the excision activity and thus NER. Dephosphorylation reactivates the 5'-excision step. Phosphorylation has no effect on transcription or the 3'-5' helicase activity.

The protein resides in the nucleus. The enzyme catalyses Couples ATP hydrolysis with the unwinding of duplex DNA by translocating in the 3'-5' direction.. It carries out the reaction ATP + H2O = ADP + phosphate + H(+). With respect to regulation, phosphorylation on Ser-751 by CK2 controls the 5'-excision activity of ERCC1-XPF endonuclease; phosphorylated protein inhibits the excision activity and thus NER. ATPase activity is stimulated by TFIIH subunit p52 (GTF2H4). DNA translocase activity by this subunit in TFIIH is stimulated by XPA, ERCC5/XPG and XFP plus ERCC1. Functionally, ATP-dependent 3'-5' DNA helicase/translocase; binds dsDNA rather than ssDNA, unzipping it in a translocase rather than classical helicase activity. Component of the general transcription and DNA repair factor IIH (TFIIH) core complex. When complexed to CDK-activating kinase (CAK), involved in RNA transcription by RNA polymerase II. The ATPase activity of XPB/ERCC3, but not its helicase activity, is required for DNA opening; it may wrap around the damaged DNA wedging it open, causing localized melting and twisting that allows XPD/ERCC2 helicase to anchor. The ATP-dependent helicase activity of XPB/ERCC3 may be required for promoter escape. Also involved in transcription-coupled nucleotide excision repair (NER) of damaged DNA. In NER, TFIIH acts by opening DNA around the lesion to allow the excision of the damaged oligonucleotide and its replacement by a new DNA fragment. The structure of the TFIIH transcription complex differs from the NER-TFIIH complex; large movements by XPD/ERCC2 and XPB/ERCC3 are stabilized by XPA. The sequence is that of General transcription and DNA repair factor IIH helicase/translocase subunit XPB (ERCC3) from Pongo abelii (Sumatran orangutan).